Reading from the N-terminus, the 603-residue chain is uncharacterized protein (603 aa).

The disordered stretch occupies residues 257–281 (AGEAASSDHDQKISRVTRKRPREPK).

This is an uncharacterized protein from Saccharomyces cerevisiae (strain ATCC 204508 / S288c) (Baker's yeast).